Reading from the N-terminus, the 162-residue chain is Ribosomal RNA large subunit methyltransferase H (162 aa).

S-adenosyl-L-methionine-binding positions include L78, G109, and 128–133 (LSPLTL).

It belongs to the RNA methyltransferase RlmH family. In terms of assembly, homodimer.

It is found in the cytoplasm. It carries out the reaction pseudouridine(1915) in 23S rRNA + S-adenosyl-L-methionine = N(3)-methylpseudouridine(1915) in 23S rRNA + S-adenosyl-L-homocysteine + H(+). Functionally, specifically methylates the pseudouridine at position 1915 (m3Psi1915) in 23S rRNA. This chain is Ribosomal RNA large subunit methyltransferase H, found in Psychrobacter sp. (strain PRwf-1).